A 139-amino-acid chain; its full sequence is Large-conductance mechanosensitive channel (139 aa).

2 helical membrane-spanning segments follow: residues 9–29 and 79–99; these read AFAV…GAAF and IQTV…VKAI.

This sequence belongs to the MscL family. Homopentamer.

The protein resides in the cell inner membrane. Functionally, channel that opens in response to stretch forces in the membrane lipid bilayer. May participate in the regulation of osmotic pressure changes within the cell. This Pseudomonas putida (strain ATCC 47054 / DSM 6125 / CFBP 8728 / NCIMB 11950 / KT2440) protein is Large-conductance mechanosensitive channel.